The sequence spans 410 residues: Arginine deiminase (410 aa).

Cysteine 400 functions as the Amidino-cysteine intermediate in the catalytic mechanism.

This sequence belongs to the arginine deiminase family.

It is found in the cytoplasm. It catalyses the reaction L-arginine + H2O = L-citrulline + NH4(+). It participates in amino-acid degradation; L-arginine degradation via ADI pathway; carbamoyl phosphate from L-arginine: step 1/2. The chain is Arginine deiminase from Bacillus thuringiensis subsp. konkukian (strain 97-27).